Consider the following 697-residue polypeptide: Phenoloxidase 1 (697 aa).

Residues 1-101 constitute a propeptide, removed by PPAE1; it reads MSDMSGDVVE…PKHQEMATEV (101 aa). Cu cation is bound by residues H217, H221, and H247. Residues N260 and N313 are each glycosylated (N-linked (GlcNAc...) asparagine). E355 (proton acceptor) is an active-site residue. The Cu cation site is built by H370, H374, and H410. N-linked (GlcNAc...) asparagine glycosylation is found at N498 and N552. 2 disulfides stabilise this stretch: C587-C631 and C589-C638.

This sequence belongs to the tyrosinase family. As to quaternary structure, heterodimer. It depends on Cu(2+) as a cofactor. In terms of processing, activated by the cleavage of the N-terminal propeptide by PPAE1. Expressed in hemocytes.

The protein localises to the secreted. The catalysed reaction is L-tyrosine + O2 = L-dopaquinone + H2O. The enzyme catalyses 2 L-dopa + O2 = 2 L-dopaquinone + 2 H2O. Its activity is regulated as follows. Activated by a cationic detergent cetyl pyridinium chloride (CPC). Inhibited by phenyl thio-urea (PTU). Functionally, this is a copper-containing oxidase that functions in the formation of pigments such as melanins and other polyphenolic compounds. Catalyzes the rate-limiting conversions of tyrosine to DOPA, DOPA to DOPA-quinone and possibly 5,6 dihydroxyindole to indole-5'6 quinone. Catalyzes the oxidation of 4-methylcatechol. Binds to the surface of hemocytes and is involved in hemocyte melanization. The chain is Phenoloxidase 1 from Spodoptera litura (Asian cotton leafworm).